The primary structure comprises 1278 residues: Sterol regulatory element-binding protein cleavage-activating protein (1278 aa).

At 1-18 the chain is on the cytoplasmic side; that stretch reads MTLTERLREKISQAFYNH. Residues 19–39 form a helical membrane-spanning segment; sequence GLFCASYPIPIILFTGLCILA. Topologically, residues 40–279 are lumenal; sequence CCYPLLKLPL…SLVHVHFKEE (240 aa). The tract at residues 46-284 is loop-1; the sequence is KLPLPGTGPV…HFKEEIGIAE (239 aa). Residues 60–80 are disordered; it reads PVKDYSPPPLTSDHKPGEPNE. Residue N263 is glycosylated (N-linked (GlcNAc...) asparagine). Residues 280-300 traverse the membrane as a helical segment; the sequence is IGIAELIPLVTTYIILFAYIY. One can recognise an SSD domain in the interval 284-442; it reads ELIPLVTTYI…MLFFTTVLSI (159 aa). Residues 301–312 are Cytoplasmic-facing; the sequence is FSTRKIDMVKSK. A helical membrane pass occupies residues 313 to 333; it reads WGLALAAVVTVLSSLLMSVGL. At 334-344 the chain is on the lumenal side; sequence CTLFGLTPTLN. Residues 345-365 traverse the membrane as a helical segment; the sequence is GGEIFPYLVVVIGLENVLVLT. The Cytoplasmic segment spans residues 366–401; it reads KSVVSTPVDLEVKLRIAQGLSSESWSIMKNMATELG. A helical transmembrane segment spans residues 402-422; that stretch reads IVLIGYFTLVPAIQEFCLFAV. Position 423 (V423) is a topological domain, lumenal. Residues 424-444 traverse the membrane as a helical segment; the sequence is GLVSDFFLQMLFFTTVLSIDI. The Cytoplasmic segment spans residues 445–518; that stretch reads RRMELADLNK…FLARTRLAQR (74 aa). An ER export signal motif is present at residues 447–452; that stretch reads MELADL. Glycyl lysine isopeptide (Lys-Gly) (interchain with G-Cter in ubiquitin) cross-links involve residues K454 and K466. Residues 519-539 traverse the membrane as a helical segment; it reads LIMAGTVVWIGILVYTDPAGL. The interval 535-710 is loop-7; the sequence is DPAGLRTYLA…QAQRDLTLYK (176 aa). Topologically, residues 540–707 are lumenal; the sequence is RTYLAAQVTE…GTAQAQRDLT (168 aa). The disordered stretch occupies residues 581-618; that stretch reads PPDASKLPENQTLPGEPPEPGGLAEGVHDSPAPEVTWG. 2 N-linked (GlcNAc...) asparagine glycosylation sites follow: N590 and N641. Residues 668 to 696 are disordered; it reads EGRHPQDGRSAWPPPRPGQGGLWEAGPKG. The chain crosses the membrane as a helical span at residues 708 to 728; the sequence is LYKVAALGLASGIVLVLLLLC. Over 729–1278 the chain is Cytoplasmic; sequence LYRVLCPRNY…YVPSVLEKLD (550 aa). The interval 731 to 1278 is interaction with SREBF2; the sequence is RVLCPRNYGQ…YVPSVLEKLD (548 aa). The WD 1 repeat unit spans residues 771–811; it reads VLRGHLMDIECLASDGMLLVSCCLAGHVCVWDAQTGDCLTR. Phosphoserine occurs at positions 821, 837, 850, 905, and 935. The interval 834–904 is disordered; the sequence is ERLSDGGKGG…RYRAGRRAQD (71 aa). WD repeat units follow at residues 951–1001 and 1004–1041; these read PPEK…LRCS and EVSS…ALSP. Omega-N-methylarginine is present on R1050. 4 WD repeats span residues 1076 to 1113, 1116 to 1154, 1157 to 1194, and 1196 to 1234; these read AHQK…CLFT, GHSG…RVSH, AHRG…KLYS, and QQDL…LLQT.

Belongs to the WD repeat SCAP family. Membrane region forms a homotetramer. Component of the SCAP-SREBP complex (composed of SCAP and SREBF1/SREBP1 or SREBF2/SREBP2); interacts with SREBF1/SREBP1 or SREBF2/SREBP2 through its C-terminal cytoplasmic domain. Forms a ternary complex with INSIG1 or INSIG2 through its transmembrane domains at high sterol concentrations. Interacts with PAQR3; the interaction anchors the SCAP-SREBP complex to the Golgi apparatus in low cholesterol conditions. Interacts with the SEC23-SEC24 complex in a SAR1-GTP-dependent manner through an ER export signal in its third cytoplasmic loop. Interacts with RNF139; the interaction inhibits the interaction of SCAP with SEC24B and hampering the ER to Golgi transport of the SCAP-SREBP complex. Interacts with SPRING1. In terms of processing, ubiquitinated at Lys-454 and Lys-466. RNF145 triggers ubiquitination of SCAP, likely inhibiting SCAP-SREBP complex transport to the Golgi apparatus and the subsequent processing/maturation of SREBF2/SREBP2.

The protein localises to the endoplasmic reticulum membrane. It is found in the golgi apparatus membrane. Its subcellular location is the cytoplasmic vesicle. The protein resides in the COPII-coated vesicle membrane. Escort protein required for cholesterol as well as lipid homeostasis. Regulates export of the SCAP-SREBP complex from the endoplasmic reticulum to the Golgi upon low cholesterol, thereby regulating the processing of sterol regulatory element-binding proteins (SREBPs) SREBF1/SREBP1 and SREBF2/SREBP2. At high sterol concentrations, formation of a ternary complex with INSIG (INSIG1 or INSIG2) leads to mask the ER export signal in SCAP, promoting retention of the complex in the endoplasmic reticulum. Low sterol concentrations trigger release of INSIG, a conformational change in the SSD domain of SCAP, unmasking of the ER export signal, promoting recruitment into COPII-coated vesicles and transport of the SCAP-SREBP to the Golgi: in the Golgi, SREBPs are then processed, releasing the transcription factor fragment of SREBPs from the membrane, its import into the nucleus and up-regulation of LDLR, INSIG1 and the mevalonate pathway. Binds cholesterol via its SSD domain. The protein is Sterol regulatory element-binding protein cleavage-activating protein of Bos taurus (Bovine).